Reading from the N-terminus, the 235-residue chain is Aspartate/glutamate leucyltransferase (235 aa).

It belongs to the R-transferase family. Bpt subfamily.

The protein resides in the cytoplasm. The enzyme catalyses N-terminal L-glutamyl-[protein] + L-leucyl-tRNA(Leu) = N-terminal L-leucyl-L-glutamyl-[protein] + tRNA(Leu) + H(+). It catalyses the reaction N-terminal L-aspartyl-[protein] + L-leucyl-tRNA(Leu) = N-terminal L-leucyl-L-aspartyl-[protein] + tRNA(Leu) + H(+). In terms of biological role, functions in the N-end rule pathway of protein degradation where it conjugates Leu from its aminoacyl-tRNA to the N-termini of proteins containing an N-terminal aspartate or glutamate. This is Aspartate/glutamate leucyltransferase from Shewanella putrefaciens (strain CN-32 / ATCC BAA-453).